The primary structure comprises 231 residues: dTTP/UTP pyrophosphatase (231 aa).

The active-site Proton acceptor is the Asp81.

Belongs to the Maf family. YhdE subfamily. Requires a divalent metal cation as cofactor.

It localises to the cytoplasm. The enzyme catalyses dTTP + H2O = dTMP + diphosphate + H(+). It catalyses the reaction UTP + H2O = UMP + diphosphate + H(+). Functionally, nucleoside triphosphate pyrophosphatase that hydrolyzes dTTP and UTP. May have a dual role in cell division arrest and in preventing the incorporation of modified nucleotides into cellular nucleic acids. This Lawsonia intracellularis (strain PHE/MN1-00) protein is dTTP/UTP pyrophosphatase.